Reading from the N-terminus, the 348-residue chain is Beta-hexosaminidase (348 aa).

Substrate contacts are provided by residues Asp-64, Arg-72, Arg-138, and 168–169 (KH). The active-site Proton donor/acceptor is His-181. Asp-252 (nucleophile) is an active-site residue.

Belongs to the glycosyl hydrolase 3 family. NagZ subfamily.

Its subcellular location is the cytoplasm. The catalysed reaction is Hydrolysis of terminal non-reducing N-acetyl-D-hexosamine residues in N-acetyl-beta-D-hexosaminides.. The protein operates within cell wall biogenesis; peptidoglycan recycling. Plays a role in peptidoglycan recycling by cleaving the terminal beta-1,4-linked N-acetylglucosamine (GlcNAc) from peptide-linked peptidoglycan fragments, giving rise to free GlcNAc, anhydro-N-acetylmuramic acid and anhydro-N-acetylmuramic acid-linked peptides. The chain is Beta-hexosaminidase from Nitrosomonas eutropha (strain DSM 101675 / C91 / Nm57).